The following is a 353-amino-acid chain: Photosystem II D2 protein (353 aa).

Thr-2 carries the post-translational modification N-acetylthreonine. Residue Thr-2 is modified to Phosphothreonine. The chain crosses the membrane as a helical span at residues 41–61 (CAYFALGGWFTGTTFVTSWYT). His-118 lines the chlorophyll a pocket. A helical membrane pass occupies residues 125 to 141 (GFMLRQFELARSVQLRP). Pheophytin a-binding residues include Gln-130 and Asn-143. A helical membrane pass occupies residues 153-166 (VFVSVFLIYPLGQS). A chlorophyll a-binding site is contributed by His-198. Residues 208-228 (AALLCAIHGATVENTLFEDGD) traverse the membrane as a helical segment. The a plastoquinone site is built by His-215 and Phe-262. His-215 provides a ligand contact to Fe cation. His-269 serves as a coordination point for Fe cation. A helical membrane pass occupies residues 279 to 295 (GLWMSALGVVGLALNLR).

Belongs to the reaction center PufL/M/PsbA/D family. In terms of assembly, PSII is composed of 1 copy each of membrane proteins PsbA, PsbB, PsbC, PsbD, PsbE, PsbF, PsbH, PsbI, PsbJ, PsbK, PsbL, PsbM, PsbT, PsbX, PsbY, PsbZ, Psb30/Ycf12, at least 3 peripheral proteins of the oxygen-evolving complex and a large number of cofactors. It forms dimeric complexes. The cofactor is The D1/D2 heterodimer binds P680, chlorophylls that are the primary electron donor of PSII, and subsequent electron acceptors. It shares a non-heme iron and each subunit binds pheophytin, quinone, additional chlorophylls, carotenoids and lipids. There is also a Cl(-1) ion associated with D1 and D2, which is required for oxygen evolution. The PSII complex binds additional chlorophylls, carotenoids and specific lipids..

It localises to the plastid. It is found in the chloroplast thylakoid membrane. The enzyme catalyses 2 a plastoquinone + 4 hnu + 2 H2O = 2 a plastoquinol + O2. In terms of biological role, photosystem II (PSII) is a light-driven water:plastoquinone oxidoreductase that uses light energy to abstract electrons from H(2)O, generating O(2) and a proton gradient subsequently used for ATP formation. It consists of a core antenna complex that captures photons, and an electron transfer chain that converts photonic excitation into a charge separation. The D1/D2 (PsbA/PsbD) reaction center heterodimer binds P680, the primary electron donor of PSII as well as several subsequent electron acceptors. D2 is needed for assembly of a stable PSII complex. The polypeptide is Photosystem II D2 protein (Populus trichocarpa (Western balsam poplar)).